The chain runs to 436 residues: Ribulose bisphosphate carboxylase large chain (436 aa).

Asparagine 104 and threonine 154 together coordinate substrate. Lysine 156 serves as the catalytic Proton acceptor. Lysine 158 provides a ligand contact to substrate. Positions 182, 184, and 185 each coordinate Mg(2+). Position 182 is an N6-carboxylysine (lysine 182). Histidine 275 acts as the Proton acceptor in catalysis. Residues arginine 276, histidine 308, and serine 360 each contribute to the substrate site.

Belongs to the RuBisCO large chain family. Type I subfamily. As to quaternary structure, heterohexadecamer of 8 large chains and 8 small chains; disulfide-linked. The disulfide link is formed within the large subunit homodimers. It depends on Mg(2+) as a cofactor. Post-translationally, the disulfide bond which can form in the large chain dimeric partners within the hexadecamer appears to be associated with oxidative stress and protein turnover.

The protein localises to the plastid. It localises to the chloroplast. It carries out the reaction 2 (2R)-3-phosphoglycerate + 2 H(+) = D-ribulose 1,5-bisphosphate + CO2 + H2O. The enzyme catalyses D-ribulose 1,5-bisphosphate + O2 = 2-phosphoglycolate + (2R)-3-phosphoglycerate + 2 H(+). Its function is as follows. RuBisCO catalyzes two reactions: the carboxylation of D-ribulose 1,5-bisphosphate, the primary event in carbon dioxide fixation, as well as the oxidative fragmentation of the pentose substrate in the photorespiration process. Both reactions occur simultaneously and in competition at the same active site. In Euglena anabaena (Euglenaria anabaena), this protein is Ribulose bisphosphate carboxylase large chain.